The sequence spans 993 residues: UPF0182 protein MAP_3291c (993 aa).

The next 7 helical transmembrane spans lie at 18 to 38, 63 to 83, 113 to 133, 175 to 195, 210 to 230, 254 to 274, and 287 to 307; these read ILIL…RLID, FVVF…GLAV, LVSV…AQSY, FVAV…FGGI, IQLV…YWLD, AVLP…AAVF, and IGLV…PLIV. Residues 903–941 are disordered; sequence NIQPTEGGAPAASPPANAPAPAVTPGSAPPVAAPPVPDG. The span at 929–939 shows a compositional bias: pro residues; that stretch reads SAPPVAAPPVP.

The protein belongs to the UPF0182 family.

Its subcellular location is the cell membrane. The polypeptide is UPF0182 protein MAP_3291c (Mycolicibacterium paratuberculosis (strain ATCC BAA-968 / K-10) (Mycobacterium paratuberculosis)).